A 544-amino-acid polypeptide reads, in one-letter code: ATP-dependent RNA helicase HAS1 (544 aa).

Low complexity predominate over residues 1-10 (MSSTKPPTTT). The interval 1–59 (MSSTKPPTTTNKRKRTSNAHDEAPAKRVPEASSSKVTLDDSQPAPATSSDAVLGARSAP) is disordered. Positions 18–29 (NAHDEAPAKRVP) are enriched in basic and acidic residues. The span at 31-50 (ASSSKVTLDDSQPAPATSSD) shows a compositional bias: polar residues. The Q motif motif lies at 66 to 94 (VPFSTLNLSPPTTAAIERMGFETMTEVQA). The Helicase ATP-binding domain maps to 97–273 (IPPLLAGKDV…RISLRPGPLY (177 aa)). 110-117 (ARTGSGKT) lines the ATP pocket. The short motif at 220–223 (DEAD) is the DEAD box element. The 170-residue stretch at 287-456 (MLEQGYVVCE…DVQKQLESLI (170 aa)) folds into the Helicase C-terminal domain. The short motif at 299 to 315 (QRFMLLFTFLKKNLKKK) is the Bipartite nuclear localization signal element. A disordered region spans residues 513 to 544 (GSVKAKKSRDEDESSDDDGQPKKAYYRNRGRK).

It belongs to the DEAD box helicase family. DDX18/HAS1 subfamily. As to quaternary structure, associates in the nucleolus with the 60S and pre-60S ribosomal subunits.

It localises to the nucleus. The protein localises to the nucleolus. It catalyses the reaction ATP + H2O = ADP + phosphate + H(+). In terms of biological role, ATP-dependent RNA helicase involved in 40S ribosomal subunit biogenesis. Required for the processing and cleavage of 35S pre-rRNA at sites A0, A1, and A2, leading to mature 18S rRNA. In Cryptococcus neoformans var. neoformans serotype D (strain JEC21 / ATCC MYA-565) (Filobasidiella neoformans), this protein is ATP-dependent RNA helicase HAS1 (HAS1).